An 807-amino-acid polypeptide reads, in one-letter code: Probable E3 ubiquitin-protein ligase mug30 (807 aa).

One can recognise an HECT domain in the interval 453–807 (RNKDFRKALK…LLETNGFNIR (355 aa)). Residue cysteine 775 is the Glycyl thioester intermediate of the active site.

Its subcellular location is the cytoplasm. The protein resides in the cytoskeleton. It localises to the microtubule organizing center. It is found in the spindle pole body. It catalyses the reaction S-ubiquitinyl-[E2 ubiquitin-conjugating enzyme]-L-cysteine + [acceptor protein]-L-lysine = [E2 ubiquitin-conjugating enzyme]-L-cysteine + N(6)-ubiquitinyl-[acceptor protein]-L-lysine.. The protein operates within protein modification; protein ubiquitination. Functionally, probable E3 ubiquitin-protein ligase. Has a role in meiosis. This Schizosaccharomyces pombe (strain 972 / ATCC 24843) (Fission yeast) protein is Probable E3 ubiquitin-protein ligase mug30 (mug30).